A 395-amino-acid chain; its full sequence is Succinyl-diaminopimelate desuccinylase (395 aa).

His74 contributes to the Zn(2+) binding site. Asp76 is a catalytic residue. Asp107 serves as a coordination point for Zn(2+). The active-site Proton acceptor is the Glu141. Zn(2+) is bound by residues Glu142, Glu170, and His368.

Belongs to the peptidase M20A family. DapE subfamily. As to quaternary structure, homodimer. Zn(2+) serves as cofactor. It depends on Co(2+) as a cofactor.

It carries out the reaction N-succinyl-(2S,6S)-2,6-diaminopimelate + H2O = (2S,6S)-2,6-diaminopimelate + succinate. It participates in amino-acid biosynthesis; L-lysine biosynthesis via DAP pathway; LL-2,6-diaminopimelate from (S)-tetrahydrodipicolinate (succinylase route): step 3/3. Catalyzes the hydrolysis of N-succinyl-L,L-diaminopimelic acid (SDAP), forming succinate and LL-2,6-diaminopimelate (DAP), an intermediate involved in the bacterial biosynthesis of lysine and meso-diaminopimelic acid, an essential component of bacterial cell walls. The polypeptide is Succinyl-diaminopimelate desuccinylase (Brucella melitensis biotype 2 (strain ATCC 23457)).